The sequence spans 370 residues: Anthranilate phosphoribosyltransferase (370 aa).

5-phospho-alpha-D-ribose 1-diphosphate-binding positions include glycine 82, glycine 85–aspartate 86, threonine 90, asparagine 92–threonine 95, lysine 110–serine 118, and serine 122. Glycine 82 contacts anthranilate. Position 94 (serine 94) interacts with Mg(2+). Asparagine 113 contacts anthranilate. Anthranilate is bound at residue arginine 168. Residues aspartate 226 and glutamate 227 each contribute to the Mg(2+) site.

This sequence belongs to the anthranilate phosphoribosyltransferase family. Homodimer. Mg(2+) serves as cofactor.

It carries out the reaction N-(5-phospho-beta-D-ribosyl)anthranilate + diphosphate = 5-phospho-alpha-D-ribose 1-diphosphate + anthranilate. It participates in amino-acid biosynthesis; L-tryptophan biosynthesis; L-tryptophan from chorismate: step 2/5. Catalyzes the transfer of the phosphoribosyl group of 5-phosphorylribose-1-pyrophosphate (PRPP) to anthranilate to yield N-(5'-phosphoribosyl)-anthranilate (PRA). The polypeptide is Anthranilate phosphoribosyltransferase (Methanosarcina mazei (strain ATCC BAA-159 / DSM 3647 / Goe1 / Go1 / JCM 11833 / OCM 88) (Methanosarcina frisia)).